We begin with the raw amino-acid sequence, 65 residues long: Large ribosomal subunit protein bL35 (65 aa).

This sequence belongs to the bacterial ribosomal protein bL35 family.

The sequence is that of Large ribosomal subunit protein bL35 from Rhodospirillum rubrum (strain ATCC 11170 / ATH 1.1.1 / DSM 467 / LMG 4362 / NCIMB 8255 / S1).